Reading from the N-terminus, the 180-residue chain is Endoribonuclease YbeY (180 aa).

Residues His-118, His-122, and His-128 each contribute to the Zn(2+) site.

It belongs to the endoribonuclease YbeY family. It depends on Zn(2+) as a cofactor.

Its subcellular location is the cytoplasm. Single strand-specific metallo-endoribonuclease involved in late-stage 70S ribosome quality control and in maturation of the 3' terminus of the 16S rRNA. The polypeptide is Endoribonuclease YbeY (Rhodococcus erythropolis (strain PR4 / NBRC 100887)).